Consider the following 377-residue polypeptide: NADH dehydrogenase [ubiquinone] 1 alpha subcomplex subunit 9, mitochondrial (377 aa).

A mitochondrion-targeting transit peptide spans 1 to 35 (MAAAVRFRVVRALPMSRPAITAAATSVFCGSSHRQ). Lys175 is subject to N6-succinyllysine. 2 positions are modified to N6-acetyllysine: Lys189 and Lys370.

Belongs to the complex I NDUFA9 subunit family. In terms of assembly, complex I is composed of 45 different subunits. This a component of the hydrophobic protein fraction. Interacts with BLOC1S1. Interacts with SLC2A4. Interacts with CLOCK. Interacts with RAB5IF. FAD is required as a cofactor. Post-translationally, acetylated on lysine residues. BLOC1S1 is required for acetylation. Acetylated by CLOCK in a circadian manner.

Its subcellular location is the mitochondrion matrix. Functionally, accessory subunit of the mitochondrial membrane respiratory chain NADH dehydrogenase (Complex I), that is believed not to be involved in catalysis. Complex I functions in the transfer of electrons from NADH to the respiratory chain. The immediate electron acceptor for the enzyme is believed to be ubiquinone. The protein is NADH dehydrogenase [ubiquinone] 1 alpha subcomplex subunit 9, mitochondrial (Ndufa9) of Mus musculus (Mouse).